A 1000-amino-acid polypeptide reads, in one-letter code: Integrin alpha-PS5 (1000 aa).

7 FG-GAP repeats span residues 15–74 (KHLK…GSCS), 75–137 (HYVL…DTPP), 145–198 (SLIP…AAQG), 199–261 (SYAV…GEIV), 262–323 (RKLH…FKFE), 324–379 (KKII…GLRD), and 386–448 (DAPS…SESR). N-linked (GlcNAc...) asparagine glycosylation occurs at Asn-58. Asn-231 carries N-linked (GlcNAc...) asparagine glycosylation. 9 N-linked (GlcNAc...) asparagine glycosylation sites follow: Asn-516, Asn-592, Asn-622, Asn-732, Asn-771, Asn-829, Asn-842, Asn-853, and Asn-922. The chain crosses the membrane as a helical span at residues 930–950 (IWYIILSLIAGHLLLGAMTYI). Residues 951-1000 (LYKLRFFKRGKKEELKRLLEEHRSETKEPATDCEGNQEEINVEMHSDLEN) are Cytoplasmic-facing. A compositionally biased stretch (basic and acidic residues) spans 971–980 (EHRSETKEPA). The disordered stretch occupies residues 971-1000 (EHRSETKEPATDCEGNQEEINVEMHSDLEN).

It belongs to the integrin alpha chain family. As to quaternary structure, heterodimer of an alpha and a beta subunit. Alpha-PS5 associates with beta-PS. As to expression, expressed in all follicle cells overlying the oocyte during mid-oogenesis, the strongest expression is observed in the cells covering the anterior end of the oocyte and in the cells forming the dorsal appendages. After completion of oocyte enlargement, expression in main body follicle cells is down-regulated but persists strongly in the dorsal appendage forming cells. Expressed in lamellocytes.

The protein resides in the membrane. Functionally, possible role in cell-cell interactions. Minor involvement in the establishment of the oocyte anterior-posterior length. This chain is Integrin alpha-PS5, found in Drosophila melanogaster (Fruit fly).